We begin with the raw amino-acid sequence, 907 residues long: MLASLIGGIFGTKNERELKRMRKIVEQINALEPTISALSDADLSAKTPEFKQRYNNGESLDKLLPEAFAVCREAAKRVMGMRHYDVQLIGGITLHEGKIAEMRTGEGKTLMGTLACYLNALSGEGVHVITVNDYLAQRDAELNRPLFEFLGLSIGTIYSMQEPAEKAAAYLADITYGTNNEFGFDYLRDNMVFSLAEKKQRGLHYAIIDEVDSILIDEARTPLIISGQSEDSSHLYTAINTIPPKLRPQKEEKVADGGHFWIDEKQRSVEMTEIGYETVEQELIQMGLLAEGESLYSATNLNLVHHVSAAIRAHFLFQRDVHYIIHDGEVIIVDEHTGRTMPGRRWSEGLHQAVEAKEGLTIQPENQTLATTTFQNYFRLYKKLSGMTGTADTEAAEMKEIYGLDVVIIPTHRPMIRNDQNDLIYLNRNGKYNAIIQEIMNIRQQGVAPILIGTATIEASEILSSKLKQAGIHHEVLNAKQHEREADIIAQAGSPNAVTIATNMAGRGTDIILGGNWKAKLAKLENPTPEDEARLKAQWEQDHEDVLQAGGLHIIGSERHESRRIDNQLRGRAGRQGDPGVSRFYLSLEDDLMRIFAGDRVVAMMRAMGLKEDEAIEHKMVSRSIENAQRKVEARNFDIRKNLLKYDDVNNEQRKIIYSQRDEILAENTLQEYVEEMHREVMQAMIANFIPPESIHDQWDVEGLENALRIDLGIELPVQEWLEQDRRLDEEGLVERISDEVIARYRQRRAQMGDESAAMLERHFVLNSLDRHWKDHLAAMDYLRQGIHLRGYAQKNPEQEYKKEAFNLFVNMLGVIKTDVVTDLSRVHIPTPEELAEMEAQQQQQAEAMKLSFEHDDVDGLTGEVTASQEALNESATEQQTFPVPESRNAPCPCGSGLKYKQCHGKI.

ATP-binding positions include Gln87, 105-109 (GEGKT), and Asp510. Zn(2+) is bound by residues Cys892, Cys894, Cys903, and His904.

Belongs to the SecA family. Monomer and homodimer. Part of the essential Sec protein translocation apparatus which comprises SecA, SecYEG and auxiliary proteins SecDF-YajC and YidC. Requires Zn(2+) as cofactor.

The protein localises to the cell inner membrane. It is found in the cytoplasm. It catalyses the reaction ATP + H2O + cellular proteinSide 1 = ADP + phosphate + cellular proteinSide 2.. Functionally, part of the Sec protein translocase complex. Interacts with the SecYEG preprotein conducting channel. Has a central role in coupling the hydrolysis of ATP to the transfer of proteins into and across the cell membrane, serving both as a receptor for the preprotein-SecB complex and as an ATP-driven molecular motor driving the stepwise translocation of polypeptide chains across the membrane. This Acinetobacter baumannii (strain ATCC 17978 / DSM 105126 / CIP 53.77 / LMG 1025 / NCDC KC755 / 5377) protein is Protein translocase subunit SecA.